The primary structure comprises 337 residues: Fructose-1,6-bisphosphatase class 1 (337 aa).

4 residues coordinate Mg(2+): glutamate 94, aspartate 116, leucine 118, and aspartate 119. Substrate contacts are provided by residues 119–122 (DGSS), asparagine 210, and lysine 276. Glutamate 282 contributes to the Mg(2+) binding site.

The protein belongs to the FBPase class 1 family. In terms of assembly, homotetramer. Mg(2+) serves as cofactor.

Its subcellular location is the cytoplasm. The enzyme catalyses beta-D-fructose 1,6-bisphosphate + H2O = beta-D-fructose 6-phosphate + phosphate. The protein operates within carbohydrate biosynthesis; gluconeogenesis. This Burkholderia cenocepacia (strain HI2424) protein is Fructose-1,6-bisphosphatase class 1.